The following is a 193-amino-acid chain: uncharacterized protein (193 aa).

Positions 1–144 are disordered; that stretch reads MEKKRTLSVN…NNNNNNEGTI (144 aa). A compositionally biased stretch (low complexity) spans 29–86; the sequence is NSLNNIENNECNNNNNNNNNNNNNNSNSNNLNNSNNNNINTSSNSINSSNSINNSIDN. Residues 103–118 are compositionally biased toward polar residues; it reads KMNSSQEFQSYLTPNK. Residues 119–140 are compositionally biased toward low complexity; the sequence is NNNNRNNNNRNNNNNNNNNNNN. The chain crosses the membrane as a helical span at residues 158-180; that stretch reads YMIRPFLVGASASFGISIGMFYF.

It is found in the membrane. This is an uncharacterized protein from Dictyostelium discoideum (Social amoeba).